The following is an 88-amino-acid chain: Cell division topological specificity factor (88 aa).

The protein belongs to the MinE family.

In terms of biological role, prevents the cell division inhibition by proteins MinC and MinD at internal division sites while permitting inhibition at polar sites. This ensures cell division at the proper site by restricting the formation of a division septum at the midpoint of the long axis of the cell. This chain is Cell division topological specificity factor, found in Aromatoleum aromaticum (strain DSM 19018 / LMG 30748 / EbN1) (Azoarcus sp. (strain EbN1)).